Reading from the N-terminus, the 319-residue chain is ADP-L-glycero-D-manno-heptose-6-epimerase (319 aa).

NADP(+)-binding positions include 10 to 11, 31 to 32, Lys-38, Lys-53, and 75 to 79; these read FI, DD, and EGACS. Tyr-139 serves as the catalytic Proton acceptor. Lys-143 serves as a coordination point for NADP(+). Residue Asn-168 participates in substrate binding. Val-169 and Lys-177 together coordinate NADP(+). Lys-177 acts as the Proton acceptor in catalysis. Substrate-binding positions include Ser-179, His-186, 200–203, Arg-213, and Tyr-281; that span reads FEGA.

The protein belongs to the NAD(P)-dependent epimerase/dehydratase family. HldD subfamily. Homopentamer. Requires NADP(+) as cofactor.

It carries out the reaction ADP-D-glycero-beta-D-manno-heptose = ADP-L-glycero-beta-D-manno-heptose. The protein operates within nucleotide-sugar biosynthesis; ADP-L-glycero-beta-D-manno-heptose biosynthesis; ADP-L-glycero-beta-D-manno-heptose from D-glycero-beta-D-manno-heptose 7-phosphate: step 4/4. Catalyzes the interconversion between ADP-D-glycero-beta-D-manno-heptose and ADP-L-glycero-beta-D-manno-heptose via an epimerization at carbon 6 of the heptose. The sequence is that of ADP-L-glycero-D-manno-heptose-6-epimerase from Aromatoleum aromaticum (strain DSM 19018 / LMG 30748 / EbN1) (Azoarcus sp. (strain EbN1)).